The primary structure comprises 488 residues: Inosine-5'-monophosphate dehydrogenase (488 aa).

CBS domains lie at 95 to 153 (VITN…SMKI) and 157 to 214 (MTKE…PNSS). NAD(+) contacts are provided by residues D251 and 301–303 (GIG). G303 and G305 together coordinate K(+). IMP is bound at residue S306. C308 provides a ligand contact to K(+). C308 serves as the catalytic Thioimidate intermediate. IMP is bound by residues 341–343 (DGG), 364–365 (GS), and 388–392 (YRGMG). The active-site Proton acceptor is the R404. E416 is a binding site for IMP. The K(+) site is built by E470, S471, and H472.

Belongs to the IMPDH/GMPR family. Homotetramer. Requires K(+) as cofactor.

It carries out the reaction IMP + NAD(+) + H2O = XMP + NADH + H(+). It functions in the pathway purine metabolism; XMP biosynthesis via de novo pathway; XMP from IMP: step 1/1. With respect to regulation, mycophenolic acid (MPA) is a non-competitive inhibitor that prevents formation of the closed enzyme conformation by binding to the same site as the amobile flap. In contrast, mizoribine monophosphate (MZP) is a competitive inhibitor that induces the closed conformation. MPA is a potent inhibitor of mammalian IMPDHs but a poor inhibitor of the bacterial enzymes. MZP is a more potent inhibitor of bacterial IMPDH. Its function is as follows. Catalyzes the conversion of inosine 5'-phosphate (IMP) to xanthosine 5'-phosphate (XMP), the first committed and rate-limiting step in the de novo synthesis of guanine nucleotides, and therefore plays an important role in the regulation of cell growth. The sequence is that of Inosine-5'-monophosphate dehydrogenase from Bacillus subtilis (strain 168).